We begin with the raw amino-acid sequence, 61 residues long: DNA-directed RNA polymerase subunit 12-like protein (61 aa).

Residues cysteine 21, cysteine 24, cysteine 38, and cysteine 41 each coordinate Zn(2+).

Belongs to the archaeal Rpo12/eukaryotic RPC10 RNA polymerase subunit family.

It is found in the nucleus. In Arabidopsis thaliana (Mouse-ear cress), this protein is DNA-directed RNA polymerase subunit 12-like protein (NRPB12L).